A 216-amino-acid chain; its full sequence is 3-isopropylmalate dehydratase small subunit (216 aa).

The protein belongs to the LeuD family. LeuD type 1 subfamily. Heterodimer of LeuC and LeuD.

It catalyses the reaction (2R,3S)-3-isopropylmalate = (2S)-2-isopropylmalate. It participates in amino-acid biosynthesis; L-leucine biosynthesis; L-leucine from 3-methyl-2-oxobutanoate: step 2/4. In terms of biological role, catalyzes the isomerization between 2-isopropylmalate and 3-isopropylmalate, via the formation of 2-isopropylmaleate. In Bordetella avium (strain 197N), this protein is 3-isopropylmalate dehydratase small subunit.